A 288-amino-acid polypeptide reads, in one-letter code: 4-diphosphocytidyl-2-C-methyl-D-erythritol kinase (288 aa).

Lys8 is a catalytic residue. 90-100 (PLEAGLAGGSA) contributes to the ATP binding site. Asp132 is an active-site residue.

The protein belongs to the GHMP kinase family. IspE subfamily.

It carries out the reaction 4-CDP-2-C-methyl-D-erythritol + ATP = 4-CDP-2-C-methyl-D-erythritol 2-phosphate + ADP + H(+). It functions in the pathway isoprenoid biosynthesis; isopentenyl diphosphate biosynthesis via DXP pathway; isopentenyl diphosphate from 1-deoxy-D-xylulose 5-phosphate: step 3/6. Functionally, catalyzes the phosphorylation of the position 2 hydroxy group of 4-diphosphocytidyl-2C-methyl-D-erythritol. The sequence is that of 4-diphosphocytidyl-2-C-methyl-D-erythritol kinase from Carboxydothermus hydrogenoformans (strain ATCC BAA-161 / DSM 6008 / Z-2901).